Consider the following 725-residue polypeptide: Catalase-peroxidase (725 aa).

The interval 1-20 is disordered; that stretch reads MSSEAKCPFPHAANRSRSNQ. The tryptophyl-tyrosyl-methioninium (Trp-Tyr) (with M-241) cross-link spans 91–215; it reads WHATGTYRTM…LSATHMGLIY (125 aa). His92 (proton acceptor) is an active-site residue. Positions 215–241 form a cross-link, tryptophyl-tyrosyl-methioninium (Tyr-Met) (with W-91); the sequence is YVNPEGPDGSGDYMAAAKDIRATFYRM. His256 contributes to the heme b binding site.

It belongs to the peroxidase family. Peroxidase/catalase subfamily. In terms of assembly, homodimer or homotetramer. It depends on heme b as a cofactor. Post-translationally, formation of the three residue Trp-Tyr-Met cross-link is important for the catalase, but not the peroxidase activity of the enzyme.

The catalysed reaction is H2O2 + AH2 = A + 2 H2O. It carries out the reaction 2 H2O2 = O2 + 2 H2O. Bifunctional enzyme with both catalase and broad-spectrum peroxidase activity. In Janthinobacterium sp. (strain Marseille) (Minibacterium massiliensis), this protein is Catalase-peroxidase.